The chain runs to 507 residues: Maturase K (507 aa).

The protein belongs to the intron maturase 2 family. MatK subfamily.

Its subcellular location is the plastid. The protein resides in the chloroplast. Usually encoded in the trnK tRNA gene intron. Probably assists in splicing its own and other chloroplast group II introns. The protein is Maturase K of Araucaria heterophylla (Norfolk Island pine).